The sequence spans 122 residues: Large ribosomal subunit protein uL14 (122 aa).

Belongs to the universal ribosomal protein uL14 family. In terms of assembly, part of the 50S ribosomal subunit. Forms a cluster with proteins L3 and L19. In the 70S ribosome, L14 and L19 interact and together make contacts with the 16S rRNA in bridges B5 and B8.

In terms of biological role, binds to 23S rRNA. Forms part of two intersubunit bridges in the 70S ribosome. The polypeptide is Large ribosomal subunit protein uL14 (Natranaerobius thermophilus (strain ATCC BAA-1301 / DSM 18059 / JW/NM-WN-LF)).